The sequence spans 350 residues: Glutamyl-tRNA reductase (350 aa).

Substrate-binding positions include 53–56, Ser-105, 110–112, and Gln-116; these read TCNR and ETQ. Catalysis depends on Cys-54, which acts as the Nucleophile. Position 185–190 (185–190) interacts with NADP(+); the sequence is GAGETA.

The protein belongs to the glutamyl-tRNA reductase family. Homodimer.

The enzyme catalyses (S)-4-amino-5-oxopentanoate + tRNA(Glu) + NADP(+) = L-glutamyl-tRNA(Glu) + NADPH + H(+). The protein operates within porphyrin-containing compound metabolism; protoporphyrin-IX biosynthesis; 5-aminolevulinate from L-glutamyl-tRNA(Glu): step 1/2. Catalyzes the NADPH-dependent reduction of glutamyl-tRNA(Glu) to glutamate 1-semialdehyde (GSA). The sequence is that of Glutamyl-tRNA reductase from Deinococcus radiodurans (strain ATCC 13939 / DSM 20539 / JCM 16871 / CCUG 27074 / LMG 4051 / NBRC 15346 / NCIMB 9279 / VKM B-1422 / R1).